A 504-amino-acid polypeptide reads, in one-letter code: Catalase (504 aa).

A signal peptide spans 1–21; it reads MQMSKSFLLITVGLASTSLQA. Catalysis depends on residues H72 and N145. Residue Y353 coordinates heme.

It belongs to the catalase family. It depends on heme as a cofactor.

Its subcellular location is the periplasm. The catalysed reaction is 2 H2O2 = O2 + 2 H2O. Functionally, decomposes hydrogen peroxide into water and oxygen; serves to protect cells from the toxic effects of hydrogen peroxide. The sequence is that of Catalase from Vibrio parahaemolyticus serotype O3:K6 (strain RIMD 2210633).